An 86-amino-acid chain; its full sequence is Large ribosomal subunit protein bL27 (86 aa).

Positions 1 to 21 (MAHKKAAGSSRNGRDSESKRL) are disordered.

The protein belongs to the bacterial ribosomal protein bL27 family.

The polypeptide is Large ribosomal subunit protein bL27 (Hahella chejuensis (strain KCTC 2396)).